The following is a 457-amino-acid chain: Siroheme synthase (457 aa).

The interval 1 to 204 (MDHLPIFCQL…ADAKAVSEIT (204 aa)) is precorrin-2 dehydrogenase /sirohydrochlorin ferrochelatase. NAD(+)-binding positions include 22–23 (DV) and 43–44 (LA). The residue at position 128 (Ser128) is a Phosphoserine. Residues 216–457 (GEVVLVGAGP…RDKLNWFSNH (242 aa)) are uroporphyrinogen-III C-methyltransferase. Pro225 lines the S-adenosyl-L-methionine pocket. Asp248 (proton acceptor) is an active-site residue. Lys270 serves as the catalytic Proton donor. Residues 301–303 (GGD), Ile306, 331–332 (TA), Met382, and Gly411 contribute to the S-adenosyl-L-methionine site.

In the N-terminal section; belongs to the precorrin-2 dehydrogenase / sirohydrochlorin ferrochelatase family. The protein in the C-terminal section; belongs to the precorrin methyltransferase family.

It carries out the reaction uroporphyrinogen III + 2 S-adenosyl-L-methionine = precorrin-2 + 2 S-adenosyl-L-homocysteine + H(+). It catalyses the reaction precorrin-2 + NAD(+) = sirohydrochlorin + NADH + 2 H(+). The enzyme catalyses siroheme + 2 H(+) = sirohydrochlorin + Fe(2+). It functions in the pathway cofactor biosynthesis; adenosylcobalamin biosynthesis; precorrin-2 from uroporphyrinogen III: step 1/1. The protein operates within cofactor biosynthesis; adenosylcobalamin biosynthesis; sirohydrochlorin from precorrin-2: step 1/1. It participates in porphyrin-containing compound metabolism; siroheme biosynthesis; precorrin-2 from uroporphyrinogen III: step 1/1. Its pathway is porphyrin-containing compound metabolism; siroheme biosynthesis; siroheme from sirohydrochlorin: step 1/1. It functions in the pathway porphyrin-containing compound metabolism; siroheme biosynthesis; sirohydrochlorin from precorrin-2: step 1/1. Its function is as follows. Multifunctional enzyme that catalyzes the SAM-dependent methylations of uroporphyrinogen III at position C-2 and C-7 to form precorrin-2 via precorrin-1. Then it catalyzes the NAD-dependent ring dehydrogenation of precorrin-2 to yield sirohydrochlorin. Finally, it catalyzes the ferrochelation of sirohydrochlorin to yield siroheme. The chain is Siroheme synthase from Citrobacter koseri (strain ATCC BAA-895 / CDC 4225-83 / SGSC4696).